Here is a 156-residue protein sequence, read N- to C-terminus: Lipoprotein signal peptidase (156 aa).

A run of 3 helical transmembrane segments spans residues 5–25 (FKFIFYFWGAFVLVFALDQWV), 64–84 (YLHLALIGVLFIYLFWQKTLL), and 89–109 (IAFGMMLGAGVSNLLDRFIYG). Residues aspartate 113 and aspartate 130 contribute to the active site. The helical transmembrane segment at 122 to 142 (NFAIFNVADVMINISVALILI) threads the bilayer.

It belongs to the peptidase A8 family.

The protein localises to the cell inner membrane. It catalyses the reaction Release of signal peptides from bacterial membrane prolipoproteins. Hydrolyzes -Xaa-Yaa-Zaa-|-(S,diacylglyceryl)Cys-, in which Xaa is hydrophobic (preferably Leu), and Yaa (Ala or Ser) and Zaa (Gly or Ala) have small, neutral side chains.. It participates in protein modification; lipoprotein biosynthesis (signal peptide cleavage). Functionally, this protein specifically catalyzes the removal of signal peptides from prolipoproteins. The chain is Lipoprotein signal peptidase from Campylobacter jejuni subsp. doylei (strain ATCC BAA-1458 / RM4099 / 269.97).